The chain runs to 254 residues: Hydroxyacylglutathione hydrolase (254 aa).

Zn(2+) is bound by residues His-53, His-55, Asp-57, His-58, His-111, Asp-128, and His-166.

It belongs to the metallo-beta-lactamase superfamily. Glyoxalase II family. In terms of assembly, monomer. Requires Zn(2+) as cofactor.

The catalysed reaction is an S-(2-hydroxyacyl)glutathione + H2O = a 2-hydroxy carboxylate + glutathione + H(+). It functions in the pathway secondary metabolite metabolism; methylglyoxal degradation; (R)-lactate from methylglyoxal: step 2/2. Thiolesterase that catalyzes the hydrolysis of S-D-lactoyl-glutathione to form glutathione and D-lactic acid. The chain is Hydroxyacylglutathione hydrolase from Aeromonas hydrophila subsp. hydrophila (strain ATCC 7966 / DSM 30187 / BCRC 13018 / CCUG 14551 / JCM 1027 / KCTC 2358 / NCIMB 9240 / NCTC 8049).